The following is a 241-amino-acid chain: MALMPLSLPFAELEVGHHLYWQIGDLYLHGQVFLSSWILIGILLAFVLVGTRGMKRDPIGLQNLLEFLWDFIRDLARDQIGEKYYRDWLPFIGTLFLFIFVSNWGGALIPWKIIELPEGELGAPTADINTTVAMALLVSLAYFYAGLSRKGLRFFELYVEPTPIMLPFKIIEEFTKPLSLSFRLFGNILADELAVGVLVYLVPLIVPLPVMLLGLFTSAIQALIFATLAAFYIGEGLHEAH.

5 consecutive transmembrane segments (helical) span residues 30 to 50 (GQVFLSSWILIGILLAFVLVG), 89 to 109 (LPFIGTLFLFIFVSNWGGALI), 128 to 148 (INTTVAMALLVSLAYFYAGLS), 193 to 213 (LAVGVLVYLVPLIVPLPVMLL), and 214 to 234 (GLFTSAIQALIFATLAAFYIG).

The protein belongs to the ATPase A chain family. As to quaternary structure, F-type ATPases have 2 components, CF(1) - the catalytic core - and CF(0) - the membrane proton channel. CF(1) has five subunits: alpha(3), beta(3), gamma(1), delta(1), epsilon(1). CF(0) has four main subunits: a, b, b' and c.

The protein resides in the cellular thylakoid membrane. Its function is as follows. Key component of the proton channel; it plays a direct role in the translocation of protons across the membrane. In Synechococcus sp. (strain CC9902), this protein is ATP synthase subunit a.